The following is a 549-amino-acid chain: Glucose-6-phosphate isomerase (549 aa).

The active-site Proton donor is the Glu355. Catalysis depends on residues His386 and Lys514.

It belongs to the GPI family.

Its subcellular location is the cytoplasm. The enzyme catalyses alpha-D-glucose 6-phosphate = beta-D-fructose 6-phosphate. Its pathway is carbohydrate biosynthesis; gluconeogenesis. It functions in the pathway carbohydrate degradation; glycolysis; D-glyceraldehyde 3-phosphate and glycerone phosphate from D-glucose: step 2/4. In terms of biological role, catalyzes the reversible isomerization of glucose-6-phosphate to fructose-6-phosphate. This Enterobacter sp. (strain 638) protein is Glucose-6-phosphate isomerase.